Reading from the N-terminus, the 264-residue chain is Thymidylate synthase (264 aa).

Position 21 (arginine 21) interacts with dUMP. Histidine 51 provides a ligand contact to (6R)-5,10-methylene-5,6,7,8-tetrahydrofolate. 126 to 127 (RR) is a binding site for dUMP. Cysteine 146 (nucleophile) is an active-site residue. Residues 166-169 (RSCD), asparagine 177, and 207-209 (HLY) contribute to the dUMP site. Aspartate 169 contributes to the (6R)-5,10-methylene-5,6,7,8-tetrahydrofolate binding site. Residue alanine 263 coordinates (6R)-5,10-methylene-5,6,7,8-tetrahydrofolate.

This sequence belongs to the thymidylate synthase family. Bacterial-type ThyA subfamily. Homodimer.

Its subcellular location is the cytoplasm. It carries out the reaction dUMP + (6R)-5,10-methylene-5,6,7,8-tetrahydrofolate = 7,8-dihydrofolate + dTMP. Its pathway is pyrimidine metabolism; dTTP biosynthesis. Catalyzes the reductive methylation of 2'-deoxyuridine-5'-monophosphate (dUMP) to 2'-deoxythymidine-5'-monophosphate (dTMP) while utilizing 5,10-methylenetetrahydrofolate (mTHF) as the methyl donor and reductant in the reaction, yielding dihydrofolate (DHF) as a by-product. This enzymatic reaction provides an intracellular de novo source of dTMP, an essential precursor for DNA biosynthesis. The chain is Thymidylate synthase from Shewanella baltica (strain OS223).